Consider the following 70-residue polypeptide: Large ribosomal subunit protein uL29 (70 aa).

The protein belongs to the universal ribosomal protein uL29 family.

This is Large ribosomal subunit protein uL29 from Rickettsia bellii (strain OSU 85-389).